The following is a 423-amino-acid chain: AP-1 complex subunit mu-2 (423 aa).

The 254-residue stretch at 168–421 (KNEVFIDVIE…ITQSGDYQLR (254 aa)) folds into the MHD domain.

The protein belongs to the adaptor complexes medium subunit family. In terms of assembly, adaptor protein complex 1 (AP-1) is a heterotetramer composed of two large adaptins (gamma-type subunit AP1G1 and beta-type subunit AP1B1), a medium adaptin (mu-type subunit AP1M1 or AP1M2) and a small adaptin (sigma-type subunit AP1S1 or AP1S2 or AP1S3). Interacts with P2X4. Post-translationally, phosphorylation of membrane-bound AP1M1/AP1M2 increases its affinity for sorting signals.

Its subcellular location is the golgi apparatus. It is found in the cytoplasmic vesicle. The protein resides in the clathrin-coated vesicle membrane. Subunit of clathrin-associated adaptor protein complex 1 that plays a role in protein sorting in the trans-Golgi network (TGN) and endosomes. The AP complexes mediate the recruitment of clathrin to membranes and the recognition of sorting signals within the cytosolic tails of transmembrane cargo molecules. This Mus musculus (Mouse) protein is AP-1 complex subunit mu-2 (Ap1m2).